We begin with the raw amino-acid sequence, 155 residues long: Ribonuclease H (155 aa).

The region spanning 1-142 (MLKQVEIFTD…CDELARNAAG (142 aa)) is the RNase H type-1 domain. Positions 10, 48, 70, and 134 each coordinate Mg(2+).

This sequence belongs to the RNase H family. In terms of assembly, monomer. Mg(2+) is required as a cofactor.

Its subcellular location is the cytoplasm. The catalysed reaction is Endonucleolytic cleavage to 5'-phosphomonoester.. Functionally, endonuclease that specifically degrades the RNA of RNA-DNA hybrids. This Erwinia tasmaniensis (strain DSM 17950 / CFBP 7177 / CIP 109463 / NCPPB 4357 / Et1/99) protein is Ribonuclease H.